The following is a 444-amino-acid chain: Bifunctional enolase 2/transcriptional activator (444 aa).

Substrate-binding residues include H163 and E172. E215 acts as the Proton donor in catalysis. Mg(2+)-binding residues include D250, E300, and D327. The substrate site is built by E300 and D327. The active-site Proton acceptor is the K352. Substrate contacts are provided by residues 379-382 (SHRS) and K403.

The protein belongs to the enolase family. In terms of assembly, homodimer. The cofactor is Mg(2+).

The protein resides in the cytoplasm. Its subcellular location is the cytosol. The protein localises to the nucleus. It localises to the mitochondrion outer membrane. It carries out the reaction (2R)-2-phosphoglycerate = phosphoenolpyruvate + H2O. Its pathway is carbohydrate degradation; glycolysis; pyruvate from D-glyceraldehyde 3-phosphate: step 4/5. In terms of biological role, multifunctional enzyme that acts as an enolase involved in the metabolism and as a positive regulator of cold-responsive gene transcription. Binds to the cis-element the gene promoter of STZ/ZAT10, a zinc finger transcriptional repressor. The protein is Bifunctional enolase 2/transcriptional activator (ENO2) of Arabidopsis thaliana (Mouse-ear cress).